The following is a 1774-amino-acid chain: Receptor-mediated endocytosis protein 6 homolog (1774 aa).

Residues 157-396 (ELLLKLLREL…EDVVAILPQQ (240 aa)) enclose the Ras-GAP domain. Disordered regions lie at residues 444–480 (IPKQ…NNRS), 517–564 (PLAN…PAPT), 661–727 (AAHS…HHHG), 784–811 (ENTL…RNFS), 869–947 (AEID…EDSA), 983–1102 (ESSF…EEQP), 1115–1142 (QEEQ…SMEQ), and 1214–1342 (RAGA…GGRS). 2 stretches are compositionally biased toward low complexity: residues 519–533 (ANGQ…SASN) and 540–557 (SSHS…AAPA). A compositionally biased stretch (basic and acidic residues) spans 674-683 (QQERDVHENE). Residues 688-713 (DMVSANVSGRGTPNISGRDTPSSQVT) are compositionally biased toward polar residues. Positions 794 to 809 (RGGDRGDRGDRDRDRN) are enriched in basic and acidic residues. Residues 887-905 (PGSGGGAGVPEAGGGGGVV) show a composition bias toward gly residues. A compositionally biased stretch (basic and acidic residues) spans 929-944 (DPDRERLRNGSERSQE). Positions 1011–1027 (MRRQTSAESSISNQSLN) are enriched in polar residues. Residues 1038–1047 (LAKHHHHHQH) are compositionally biased toward basic residues. Residues 1048–1060 (RDRDRDRDRDRDH) are compositionally biased toward basic and acidic residues. Basic residues predominate over residues 1061–1076 (REHHHKSAALKKKKHQ). Residues 1077 to 1087 (EHKEHQHRDLI) show a composition bias toward basic and acidic residues. Residues 1091 to 1101 (DCSEDKDEEEQ) are compositionally biased toward acidic residues. Residues 1115-1125 (QEEQQQQQQQQ) show a composition bias toward low complexity. Residues 1246–1291 (SADKEQQPYRDRERERDRERDRERDRDRERDRDRDRDRDRDREHHS) are compositionally biased toward basic and acidic residues. Positions 1310–1335 (SSSSKNNAIAIAAPSSINPNPSPSSA) are enriched in low complexity. Residues 1516 to 1546 (RHRQQLLLRSEQLEQLEVRLRSEARSCQRCL) adopt a coiled-coil conformation. The region spanning 1635–1774 (VSRDTVLSAH…KFIKTMDYLD (140 aa)) is the VPS9 domain.

Belongs to the GAPVD1 family.

The protein resides in the membrane. Acts both as a GTPase-activating protein (GAP) and a guanine nucleotide exchange factor (GEF), and participates in endocytosis. The sequence is that of Receptor-mediated endocytosis protein 6 homolog from Drosophila pseudoobscura pseudoobscura (Fruit fly).